A 203-amino-acid chain; its full sequence is Peptidyl-tRNA hydrolase (203 aa).

Tyr-18 lines the tRNA pocket. His-23 functions as the Proton acceptor in the catalytic mechanism. Residues Tyr-69, Asn-71, and Asn-117 each contribute to the tRNA site.

This sequence belongs to the PTH family. As to quaternary structure, monomer.

Its subcellular location is the cytoplasm. It catalyses the reaction an N-acyl-L-alpha-aminoacyl-tRNA + H2O = an N-acyl-L-amino acid + a tRNA + H(+). Functionally, hydrolyzes ribosome-free peptidyl-tRNAs (with 1 or more amino acids incorporated), which drop off the ribosome during protein synthesis, or as a result of ribosome stalling. In terms of biological role, catalyzes the release of premature peptidyl moieties from peptidyl-tRNA molecules trapped in stalled 50S ribosomal subunits, and thus maintains levels of free tRNAs and 50S ribosomes. This Parasynechococcus marenigrum (strain WH8102) protein is Peptidyl-tRNA hydrolase.